Reading from the N-terminus, the 426-residue chain is Ammonium transporter Rh type A (426 aa).

Topologically, residues methionine 1–lysine 4 are cytoplasmic. A helical membrane pass occupies residues phenylalanine 5–glutamine 25. The Extracellular segment spans residues tyrosine 26 to proline 54. Asparagine 31 and asparagine 37 each carry an N-linked (GlcNAc...) asparagine glycan. A helical transmembrane segment spans residues phenylalanine 55–tryptophan 75. At lysine 76–glycine 78 the chain is on the cytoplasmic side. The helical transmembrane segment at phenylalanine 79–isoleucine 99 threads the bilayer. Topologically, residues glutamine 100–threonine 124 are extracellular. 2 helical membrane passes run valine 125–isoleucine 145 and methionine 146–tryptophan 166. At alanine 167 to threonine 170 the chain is on the extracellular side. Residues glycine 171–leucine 191 form a helical membrane-spanning segment. The Cytoplasmic portion of the chain corresponds to tyrosine 192–aspartate 210. A helical membrane pass occupies residues leucine 211–threonine 231. At alanine 232–alanine 241 the chain is on the extracellular side. The helical transmembrane segment at isoleucine 242–leucine 262 threads the bilayer. Residues leucine 263–asparagine 270 are Cytoplasmic-facing. The helical transmembrane segment at methionine 271 to cysteine 288 threads the bilayer. Over alanine 289–glutamate 292 the chain is Extracellular. A helical membrane pass occupies residues isoleucine 293–phenylalanine 313. Over lysine 314–glycine 331 the chain is Cytoplasmic. The helical transmembrane segment at valine 332–alanine 352 threads the bilayer. At leucine 353 to serine 371 the chain is on the extracellular side. A helical transmembrane segment spans residues isoleucine 372–alanine 392. The Cytoplasmic portion of the chain corresponds to glutamine 393 to histidine 426.

It belongs to the ammonium transporter (TC 2.A.49) family. Rh subfamily. As to quaternary structure, homodimer. Heterotrimer; a RHCE monomer interacts with a RHAG homodimer. Component of the ankyrin-1 complex in the erythrocyte, composed of ANK1, RHCE, RHAG, SLC4A1, EPB42, GYPA, GYPB and AQP1. Interacts with GYPB (via the N-terminal); this interaction bridges the (RHAG)2(RHCE) heterotrimer with the SLC4A1 Band 3 I dimer complexed with GYPA. Glycosylated.

It is found in the membrane. The enzyme catalyses methylamine(out) = methylamine(in). It carries out the reaction NH4(+)(in) = NH4(+)(out). It catalyses the reaction CO2(out) = CO2(in). Its function is as follows. Component of the ankyrin-1 complex, a multiprotein complex involved in the stability and shape of the erythrocyte membrane. Heterotrimer with RHCE (RHAG)2(RHCE), that transports ammonium and its related derivative methylammonium, in both neutral and ionic forms, across the erythrocyte membrane. The transport of NH4(+) is electrogenic and masks the NH3 transport. Also, may act as a CO2 channel. Moreover in erythrocyte, regulates RHD membrane expression and is associated with rhesus blood group antigen expression. The polypeptide is Ammonium transporter Rh type A (Bos taurus (Bovine)).